A 123-amino-acid polypeptide reads, in one-letter code: Protein Wnt-7a (123 aa).

Ser-1 carries the O-palmitoleoyl serine; by PORCN lipid modification. A disordered linker region spans residues 33-61; the sequence is VEPVRASRNKRPTFLKIKKPLSYRKPMDT. A disulfide bridge connects residues Cys-89 and Cys-104. Residue Asn-90 is glycosylated (N-linked (GlcNAc...) asparagine).

This sequence belongs to the Wnt family. Forms a soluble 1:1 complex with AFM; this prevents oligomerization and is required for prolonged biological activity. The complex with AFM may represent the physiological form in body fluids. Interacts with FZD5. Interacts with PORCN. In terms of processing, palmitoleoylation is required for efficient binding to frizzled receptors. Depalmitoleoylation leads to Wnt signaling pathway inhibition.

It localises to the secreted. It is found in the extracellular space. Its subcellular location is the extracellular matrix. Its function is as follows. Ligand for members of the frizzled family of seven transmembrane receptors that functions in the canonical Wnt/beta-catenin signaling pathway. Plays an important role in embryonic development, including dorsal versus ventral patterning during limb development, skeleton development and urogenital tract development. Required for central nervous system (CNS) angiogenesis and blood-brain barrier regulation. The chain is Protein Wnt-7a (WNT7A) from Meleagris gallopavo (Wild turkey).